Consider the following 312-residue polypeptide: 2-dehydropantoate 2-reductase (312 aa).

Residues 7–12 (GAGAMG), Asn105, and Ala131 each bind NADP(+). Asn105 serves as a coordination point for substrate. Lys187 serves as the catalytic Proton donor. Positions 191, 195, and 260 each coordinate substrate. An NADP(+)-binding site is contributed by Glu273.

This sequence belongs to the ketopantoate reductase family.

It localises to the cytoplasm. The enzyme catalyses (R)-pantoate + NADP(+) = 2-dehydropantoate + NADPH + H(+). The protein operates within cofactor biosynthesis; (R)-pantothenate biosynthesis; (R)-pantoate from 3-methyl-2-oxobutanoate: step 2/2. Its function is as follows. Catalyzes the NADPH-dependent reduction of ketopantoate into pantoic acid. This is 2-dehydropantoate 2-reductase from Lactococcus lactis subsp. lactis (strain IL1403) (Streptococcus lactis).